Reading from the N-terminus, the 258-residue chain is tRNA pseudouridine synthase A (258 aa).

Aspartate 61 (nucleophile) is an active-site residue. Tyrosine 119 contacts substrate.

This sequence belongs to the tRNA pseudouridine synthase TruA family. As to quaternary structure, homodimer.

The catalysed reaction is uridine(38/39/40) in tRNA = pseudouridine(38/39/40) in tRNA. Its function is as follows. Formation of pseudouridine at positions 38, 39 and 40 in the anticodon stem and loop of transfer RNAs. This Chlorobium phaeobacteroides (strain DSM 266 / SMG 266 / 2430) protein is tRNA pseudouridine synthase A.